The sequence spans 461 residues: GTPase Der (461 aa).

EngA-type G domains lie at 3–167 and 190–371; these read PQVI…GEKQ and LKLA…AAWS. Residues 9-16, 56-60, 119-122, 196-203, 249-253, and 314-317 contribute to the GTP site; these read GRPNVGKS, DTAGW, NKAE, GRPNAGKS, DTAGM, and NKWD. The 85-residue stretch at 372-456 folds into the KH-like domain; sequence KRVPTAALNR…PIRLTLRSPK (85 aa).

The protein belongs to the TRAFAC class TrmE-Era-EngA-EngB-Septin-like GTPase superfamily. EngA (Der) GTPase family. As to quaternary structure, associates with the 50S ribosomal subunit.

Its function is as follows. GTPase that plays an essential role in the late steps of ribosome biogenesis. The sequence is that of GTPase Der from Novosphingobium aromaticivorans (strain ATCC 700278 / DSM 12444 / CCUG 56034 / CIP 105152 / NBRC 16084 / F199).